Consider the following 151-residue polypeptide: Acidic phospholipase A2 1 (151 aa).

Positions 1-21 (MNPAHLLVLSAVCVSLLGASS) are cleaved as a signal peptide. A propeptide spanning residues 22 to 27 (IPPQPL) is cleaved from the precursor. Intrachain disulfides connect cysteine 38–cysteine 104, cysteine 54–cysteine 151, cysteine 56–cysteine 72, cysteine 71–cysteine 132, cysteine 78–cysteine 125, cysteine 88–cysteine 118, and cysteine 111–cysteine 123. The Ca(2+) site is built by tyrosine 55, glycine 57, and glycine 59. Residue histidine 75 is part of the active site. Aspartate 76 serves as a coordination point for Ca(2+). Aspartate 126 is a catalytic residue.

Ca(2+) is required as a cofactor. Expressed by the venom gland.

The protein resides in the secreted. The catalysed reaction is a 1,2-diacyl-sn-glycero-3-phosphocholine + H2O = a 1-acyl-sn-glycero-3-phosphocholine + a fatty acid + H(+). In terms of biological role, snake venom phospholipase A2 (PLA2) that may exhibit cardiotoxicity, myotoxicity, antiplatelet activity, and edema-inducing activity. PLA2 catalyzes the calcium-dependent hydrolysis of the 2-acyl groups in 3-sn-phosphoglycerides. In Ophiophagus hannah (King cobra), this protein is Acidic phospholipase A2 1.